Consider the following 390-residue polypeptide: Histamine H4 receptor (390 aa).

Residues 1 to 19 (MPDTNSTINLSLSTRVTLA) lie on the Extracellular side of the membrane. N5 and N9 each carry an N-linked (GlcNAc...) asparagine glycan. Residues 20–40 (FFMSLVAFAIMLGNALVILAF) traverse the membrane as a helical segment. At 41 to 52 (VVDKNLRHRSSY) the chain is on the cytoplasmic side. Residues 53–73 (FFLNLAISDFFVGVISIPLYI) form a helical membrane-spanning segment. Residues 74-87 (PHTLFEWDFGKEIC) lie on the Extracellular side of the membrane. A disulfide bridge links C87 with C164. A helical transmembrane segment spans residues 88–108 (VFWLTTDYLLCTASVYNIVLI). At 109–131 (SYDRYLSVSNAVSYRTQHTGVLK) the chain is on the cytoplasmic side. A helical membrane pass occupies residues 132–152 (IVTLMVAVWVLAFLVNGPMIL). Topologically, residues 153-172 (VSESWKDEGSECEPGFFSEW) are extracellular. Residues 173-193 (YILAITSFLEFVIPVILVAYF) traverse the membrane as a helical segment. Topologically, residues 194–304 (NMNIYWSLWK…LLRARRLAKS (111 aa)) are cytoplasmic. A helical transmembrane segment spans residues 305–325 (LAILLGVFAVCWAPYSLFTIV). Over 326 to 341 (LSFYSSATGPKSVWYR) the chain is Extracellular. The chain crosses the membrane as a helical span at residues 342–362 (IAFWLQWFNSFVNPLLYPLCH). The Cytoplasmic portion of the chain corresponds to 363-390 (KRFQKAFLKIFCIKKQPLPSQHSRSVSS).

This sequence belongs to the G-protein coupled receptor 1 family. As to quaternary structure, interacts with TSPAN4. Expressed primarily in the bone marrow and eosinophils. Shows preferential distribution in cells of immunological relevance such as T-cells, dendritic cells, monocytes, mast cells, neutrophils. Also expressed in a wide variety of peripheral tissues, including the heart, kidney, liver, lung, pancreas, skeletal muscle, prostate, small intestine, spleen, testis, colon, fetal liver and lymph node.

It is found in the cell membrane. The H4 subclass of histamine receptors could mediate the histamine signals in peripheral tissues. Displays a significant level of constitutive activity (spontaneous activity in the absence of agonist). This is Histamine H4 receptor (HRH4) from Homo sapiens (Human).